The chain runs to 373 residues: tRNA-specific 2-thiouridylase MnmA (373 aa).

ATP contacts are provided by residues 7-14 (AMSGGVDS) and Leu-33. Cys-101 (nucleophile) is an active-site residue. The cysteines at positions 101 and 215 are disulfide-linked. Position 125 (Gly-125) interacts with ATP. The interval 165–167 (KDQ) is interaction with tRNA. Catalysis depends on Cys-215, which acts as the Cysteine persulfide intermediate.

The protein belongs to the MnmA/TRMU family.

The protein resides in the cytoplasm. It catalyses the reaction S-sulfanyl-L-cysteinyl-[protein] + uridine(34) in tRNA + AH2 + ATP = 2-thiouridine(34) in tRNA + L-cysteinyl-[protein] + A + AMP + diphosphate + H(+). In terms of biological role, catalyzes the 2-thiolation of uridine at the wobble position (U34) of tRNA, leading to the formation of s(2)U34. This Roseiflexus sp. (strain RS-1) protein is tRNA-specific 2-thiouridylase MnmA.